Reading from the N-terminus, the 245-residue chain is Probable phosphatase PC1_1798 (245 aa).

9 residues coordinate Zn(2+): His-7, His-9, His-15, His-40, Glu-73, His-101, His-131, Asp-192, and His-194.

This sequence belongs to the PHP family. As to quaternary structure, homotrimer. It depends on Zn(2+) as a cofactor.

The chain is Probable phosphatase PC1_1798 from Pectobacterium carotovorum subsp. carotovorum (strain PC1).